Consider the following 25-residue polypeptide: Antimicrobial peptide 3 (25 aa).

In terms of tissue distribution, skin.

The protein resides in the secreted. Its function is as follows. Has antibacterial activity against Gram-positive bacterium S.aureus and Gram-negative bacterium E.coli, when in combination with XT1 and XT6. In Xenopus tropicalis (Western clawed frog), this protein is Antimicrobial peptide 3.